The following is a 241-amino-acid chain: MSRVALVTGGSRGIGAAICVALKAAGYKVAANYAGNDERAKAFEQESGIPVYKWDVSSYQACVDGIARVEADLGPVDILVNNAGITRDAMFHKMTPEQWGEVIGTNLTGVFNMTHPLWSGMRDRGFGRIVNISSINGQKGQMGQVNYSAAKAGDLGLTKALAQEGAAKGITVNAICPGYIGTEMVRAVPEKVLNERIIPQIPVGRLGEPEEVARCVVFLASDDAGFITGSTISANGGQYFA.

Residues 12-14 (RGI), Arg39, and 82-86 (NAGIT) each bind NADP(+). Substrate is bound by residues Asp88 and 141–144 (QMGQ). Catalysis depends on Tyr147, which acts as the Proton acceptor. 177 to 180 (PGYI) is a binding site for NADP(+). 178 to 179 (GY) contacts substrate.

It belongs to the short-chain dehydrogenases/reductases (SDR) family.

The protein localises to the cytoplasm. It catalyses the reaction a (3R)-3-hydroxyacyl-CoA + NADP(+) = a 3-oxoacyl-CoA + NADPH + H(+). Its pathway is biopolymer metabolism; poly-(R)-3-hydroxybutanoate biosynthesis. The protein is Acetoacetyl-CoA reductase of Rhizobium meliloti (strain 1021) (Ensifer meliloti).